The sequence spans 357 residues: Protein pelota homolog (357 aa).

It belongs to the eukaryotic release factor 1 family. Pelota subfamily. Monomer. A divalent metal cation is required as a cofactor.

The protein localises to the cytoplasm. Its function is as follows. May function in recognizing stalled ribosomes, interact with stem-loop structures in stalled mRNA molecules, and effect endonucleolytic cleavage of the mRNA. May play a role in the release non-functional ribosomes and degradation of damaged mRNAs. Has endoribonuclease activity. The sequence is that of Protein pelota homolog from Thermococcus kodakarensis (strain ATCC BAA-918 / JCM 12380 / KOD1) (Pyrococcus kodakaraensis (strain KOD1)).